The primary structure comprises 204 residues: Large ribosomal subunit protein eL15 (204 aa).

This sequence belongs to the eukaryotic ribosomal protein eL15 family. Component of the large ribosomal subunit.

Its subcellular location is the cytoplasm. In terms of biological role, component of the large ribosomal subunit. The ribosome is a large ribonucleoprotein complex responsible for the synthesis of proteins in the cell. The chain is Large ribosomal subunit protein eL15 (rpl15) from Mylopharyngodon piceus (Black carp).